The primary structure comprises 153 residues: Deoxyuridine 5'-triphosphate nucleotidohydrolase (153 aa).

Residues 65–67 (RSG), asparagine 78, and 82–84 (TID) each bind substrate. Positions 132–153 (MTQRGEGGFGHTGISAVHPRTH) are disordered.

It belongs to the dUTPase family. Requires Mg(2+) as cofactor.

The catalysed reaction is dUTP + H2O = dUMP + diphosphate + H(+). It participates in pyrimidine metabolism; dUMP biosynthesis; dUMP from dCTP (dUTP route): step 2/2. In terms of biological role, this enzyme is involved in nucleotide metabolism: it produces dUMP, the immediate precursor of thymidine nucleotides and it decreases the intracellular concentration of dUTP so that uracil cannot be incorporated into DNA. The protein is Deoxyuridine 5'-triphosphate nucleotidohydrolase of Chlorobium limicola (strain DSM 245 / NBRC 103803 / 6330).